The chain runs to 119 residues: MPHFKRAAVYEEQKRTGKWGQLVEETKDRIPEYSNKTIAKISHLDNGCLWPEIKVSFSHHLSILQSMCLHFIISILFSKYIFVFLFAFLLPSAFPLFILHSTLFRKPCLSIIGFLKTKV.

2 helical membrane passes run 57–77 (FSHH…SILF) and 80–100 (YIFV…FILH).

The protein localises to the membrane. This is an uncharacterized protein from Saccharomyces cerevisiae (strain ATCC 204508 / S288c) (Baker's yeast).